The following is a 462-amino-acid chain: A-type ATP synthase subunit B (462 aa).

It belongs to the ATPase alpha/beta chains family. As to quaternary structure, has multiple subunits with at least A(3), B(3), C, D, E, F, H, I and proteolipid K(x).

The protein resides in the cell membrane. Component of the A-type ATP synthase that produces ATP from ADP in the presence of a proton gradient across the membrane. The B chain is a regulatory subunit. The chain is A-type ATP synthase subunit B from Methanococcus maripaludis (strain C7 / ATCC BAA-1331).